Consider the following 510-residue polypeptide: DNA-directed RNA polymerase I subunit RPA34 (510 aa).

An N-acetylmethionine modification is found at Met-1. Residues 1-31 are disordered; the sequence is MEEPQAGDAARFSCPPNFTAKPPASESPRFS. Phosphoserine is present on Ser-27. Phosphotyrosine is present on Tyr-80. The tract at residues 120–143 is disordered; the sequence is GPQQSLSGSPLQPIPASPPPQIPP. Residues Ser-128, Ser-136, Ser-172, and Ser-205 each carry the phosphoserine modification. Positions 131–143 are enriched in pro residues; sequence QPIPASPPPQIPP. The interval 203 to 510 is disordered; it reads LGSPEMDVRK…KRKQQQQQPV (308 aa). Basic and acidic residues predominate over residues 258-270; that stretch reads GKETFEPEDKTVK. Residue Lys-270 forms a Glycyl lysine isopeptide (Lys-Gly) (interchain with G-Cter in SUMO1); alternate linkage. Lys-270 participates in a covalent cross-link: Glycyl lysine isopeptide (Lys-Gly) (interchain with G-Cter in SUMO2); alternate. Ser-285 carries the phosphoserine modification. Phosphothreonine is present on Thr-287. Ser-309 bears the Phosphoserine mark. Residue Lys-314 forms a Glycyl lysine isopeptide (Lys-Gly) (interchain with G-Cter in SUMO1); alternate linkage. Lys-314 participates in a covalent cross-link: Glycyl lysine isopeptide (Lys-Gly) (interchain with G-Cter in SUMO2); alternate. Low complexity-rich tracts occupy residues 372–382 and 394–407; these read AKPQAQAALAA and DATVEPETEVVGPE. Over residues 421–430 the composition is skewed to basic residues; sequence TKKKKKKKER. A compositionally biased stretch (low complexity) spans 436–452; the sequence is EPIQPLEPELPGEGQPE. Ser-490 bears the Phosphoserine mark.

The protein belongs to the eukaryotic RPA34 RNA polymerase subunit family. In terms of assembly, component of the RNA polymerase I (Pol I) complex consisting of 13 subunits: a ten-subunit catalytic core composed of POLR1A/RPA1, POLR1B/RPA2, POLR1C/RPAC1, POLR1D/RPAC2, POLR1H/RPA12, POLR2E/RPABC1, POLR2F/RPABC2, POLR2H/RPABC3, POLR2K/RPABC4 and POLR2L/RPABC5; a mobile stalk subunit POLR1F/RPA43 protruding from the core and additional subunits homologous to general transcription factors POLR1E/RPA49 and POLR1G/RPA34. Forms a heterodimer with POLR1E/RPA49. Part of Pol I pre-initiation complex (PIC), in which Pol I core assembles with RRN3 and promoter-bound UTBF and SL1/TIF-IB complex. Interacts with TAF1A thereby associates with the SL1/TIF-IB complex. Interacts with UBTF. Interacts with POLR1E/PRAF1 through its N-terminal region. As to quaternary structure, interacts with CD3E. Undergoes tyrosine phosphorylation upon T-cell receptor (TCR) stimulation. This phosphorylation has not been confirmed by other groups. In terms of processing, phosphorylated on tyrosine residues in initiation-competent Pol I-beta complexes but not in Pol I-alpha complexes.

Its subcellular location is the nucleus. It localises to the nucleolus. The protein localises to the chromosome. Its function is as follows. Component of RNA polymerase I (Pol I), a DNA-dependent RNA polymerase which synthesizes ribosomal RNA precursors using the four ribonucleoside triphosphates as substrates. Involved in UBTF-activated transcription, presumably at a step following PIC formation. Has been described as a component of preformed T-cell receptor (TCR) complex. The protein is DNA-directed RNA polymerase I subunit RPA34 of Homo sapiens (Human).